The following is a 276-amino-acid chain: Large ribosomal subunit protein uL2 (276 aa).

The segment at 223–276 (GSAMNPVDHPHGGGEGKAPIGHPGPLTPWGKPTLGYKTRKKNKPSDKFIVKRRK) is disordered. Basic and acidic residues predominate over residues 265-276 (KPSDKFIVKRRK).

It belongs to the universal ribosomal protein uL2 family. Part of the 50S ribosomal subunit. Forms a bridge to the 30S subunit in the 70S ribosome.

In terms of biological role, one of the primary rRNA binding proteins. Required for association of the 30S and 50S subunits to form the 70S ribosome, for tRNA binding and peptide bond formation. It has been suggested to have peptidyltransferase activity; this is somewhat controversial. Makes several contacts with the 16S rRNA in the 70S ribosome. The chain is Large ribosomal subunit protein uL2 from Caldicellulosiruptor saccharolyticus (strain ATCC 43494 / DSM 8903 / Tp8T 6331).